The primary structure comprises 557 residues: Hepatocyte nuclear factor 1-beta (557 aa).

The dimerization stretch occupies residues 1 to 31 (MVSKLTSLQQELLSALLSSGVTKEVLIQALE). The 32-residue stretch at 1-32 (MVSKLTSLQQELLSALLSSGVTKEVLIQALEE) folds into the HNF-p1 domain. Ser49, Ser52, Ser75, and Ser80 each carry phosphoserine. The interval 66–85 (TNGHAKGRLSGDEGSEDGDD) is disordered. Positions 93–188 (KELQALNTEE…ILRQFNQTVQ (96 aa)) constitute a POU-specific atypical domain. The homeobox; HNF1-type DNA-binding region spans 231–311 (MRRNRFKWGP…NRRKEEAFRQ (81 aa)). A disordered region spans residues 324-370 (HNLNPLLTHGSPHHQPSSSPPNKLSGVRYSQPGNNEVTSSSTISHHG). The span at 354–370 (QPGNNEVTSSSTISHHG) shows a compositional bias: polar residues.

Belongs to the HNF1 homeobox family. In terms of assembly, binds DNA as a dimer. Can form homodimer or heterodimer with HNF1-alpha. Interacts (via HNF-p1 domain) with PCBD1; the interaction increases its transactivation activity. As to expression, liver, kidney and intestine.

Its subcellular location is the nucleus. Transcription factor that binds to the inverted palindrome 5'-GTTAATNATTAAC-3'. Binds to the FPC element in the cAMP regulatory unit of the PLAU gene. Transcriptional activity is increased by coactivator PCBD1. This chain is Hepatocyte nuclear factor 1-beta (Hnf1b), found in Rattus norvegicus (Rat).